The sequence spans 367 residues: Quinolinate synthase (367 aa).

Residues His-46 and Ser-63 each contribute to the iminosuccinate site. A [4Fe-4S] cluster-binding site is contributed by Cys-110. Residues 141–143 and Ser-162 each bind iminosuccinate; that span reads YVN. Cys-229 provides a ligand contact to [4Fe-4S] cluster. Iminosuccinate is bound by residues 255–257 and Thr-272; that span reads HPE. Cys-319 provides a ligand contact to [4Fe-4S] cluster.

Belongs to the quinolinate synthase family. Type 3 subfamily. [4Fe-4S] cluster is required as a cofactor.

It localises to the cytoplasm. The catalysed reaction is iminosuccinate + dihydroxyacetone phosphate = quinolinate + phosphate + 2 H2O + H(+). Its pathway is cofactor biosynthesis; NAD(+) biosynthesis; quinolinate from iminoaspartate: step 1/1. Its function is as follows. Catalyzes the condensation of iminoaspartate with dihydroxyacetone phosphate to form quinolinate. This Bacillus velezensis (strain DSM 23117 / BGSC 10A6 / LMG 26770 / FZB42) (Bacillus amyloliquefaciens subsp. plantarum) protein is Quinolinate synthase.